The sequence spans 130 residues: MDTMDTMGRHVIAELWDCDFDKLNDMPFIEQLFVDAALRAGAEVREVAFHKFAPQGVSGVVIISESHLTIHSFPEHGYASIDVYTCGDRIDPNVAAEYIAEGLNAKTRESIELPRGTGSFEIKQRETKAL.

Catalysis depends on Ser66, which acts as the Schiff-base intermediate with substrate; via pyruvic acid. At Ser66 the chain carries Pyruvic acid (Ser); by autocatalysis. His71 (proton acceptor; for processing activity) is an active-site residue. Residue Cys86 is the Proton donor; for catalytic activity of the active site.

Belongs to the prokaryotic AdoMetDC family. Type 1 subfamily. In terms of assembly, heterotetramer of two alpha and two beta chains arranged as a dimer of alpha/beta heterodimers. It depends on pyruvate as a cofactor. Is synthesized initially as an inactive proenzyme. Formation of the active enzyme involves a self-maturation process in which the active site pyruvoyl group is generated from an internal serine residue via an autocatalytic post-translational modification. Two non-identical subunits are generated from the proenzyme in this reaction, and the pyruvate is formed at the N-terminus of the alpha chain, which is derived from the carboxyl end of the proenzyme. The post-translation cleavage follows an unusual pathway, termed non-hydrolytic serinolysis, in which the side chain hydroxyl group of the serine supplies its oxygen atom to form the C-terminus of the beta chain, while the remainder of the serine residue undergoes an oxidative deamination to produce ammonia and the pyruvoyl group blocking the N-terminus of the alpha chain.

The catalysed reaction is S-adenosyl-L-methionine + H(+) = S-adenosyl 3-(methylsulfanyl)propylamine + CO2. It participates in amine and polyamine biosynthesis; S-adenosylmethioninamine biosynthesis; S-adenosylmethioninamine from S-adenosyl-L-methionine: step 1/1. In terms of biological role, catalyzes the decarboxylation of S-adenosylmethionine to S-adenosylmethioninamine (dcAdoMet), the propylamine donor required for the synthesis of the polyamines spermine and spermidine from the diamine putrescine. This is S-adenosylmethionine decarboxylase proenzyme from Bacillus cytotoxicus (strain DSM 22905 / CIP 110041 / 391-98 / NVH 391-98).